The primary structure comprises 482 residues: Aspartyl/glutamyl-tRNA(Asn/Gln) amidotransferase subunit B (482 aa).

It belongs to the GatB/GatE family. GatB subfamily. As to quaternary structure, heterotrimer of A, B and C subunits.

It carries out the reaction L-glutamyl-tRNA(Gln) + L-glutamine + ATP + H2O = L-glutaminyl-tRNA(Gln) + L-glutamate + ADP + phosphate + H(+). It catalyses the reaction L-aspartyl-tRNA(Asn) + L-glutamine + ATP + H2O = L-asparaginyl-tRNA(Asn) + L-glutamate + ADP + phosphate + 2 H(+). Allows the formation of correctly charged Asn-tRNA(Asn) or Gln-tRNA(Gln) through the transamidation of misacylated Asp-tRNA(Asn) or Glu-tRNA(Gln) in organisms which lack either or both of asparaginyl-tRNA or glutaminyl-tRNA synthetases. The reaction takes place in the presence of glutamine and ATP through an activated phospho-Asp-tRNA(Asn) or phospho-Glu-tRNA(Gln). This chain is Aspartyl/glutamyl-tRNA(Asn/Gln) amidotransferase subunit B, found in Thermotoga petrophila (strain ATCC BAA-488 / DSM 13995 / JCM 10881 / RKU-1).